The chain runs to 117 residues: Phosphoribosyl-ATP pyrophosphatase (117 aa).

Belongs to the PRA-PH family.

Its subcellular location is the cytoplasm. The catalysed reaction is 1-(5-phospho-beta-D-ribosyl)-ATP + H2O = 1-(5-phospho-beta-D-ribosyl)-5'-AMP + diphosphate + H(+). The protein operates within amino-acid biosynthesis; L-histidine biosynthesis; L-histidine from 5-phospho-alpha-D-ribose 1-diphosphate: step 2/9. In Rhodospirillum rubrum (strain ATCC 11170 / ATH 1.1.1 / DSM 467 / LMG 4362 / NCIMB 8255 / S1), this protein is Phosphoribosyl-ATP pyrophosphatase.